The primary structure comprises 293 residues: Formamidopyrimidine-DNA glycosylase (293 aa).

The active-site Schiff-base intermediate with DNA is the Pro2. Residue Glu3 is the Proton donor of the active site. The active-site Proton donor; for beta-elimination activity is the Lys58. Positions 104, 123, and 166 each coordinate DNA. The FPG-type zinc finger occupies 257 to 293 (KVYDREGEPCPTLRCKGHVQRIVQAGRSTFFCATCQR). Arg283 serves as the catalytic Proton donor; for delta-elimination activity.

This sequence belongs to the FPG family. As to quaternary structure, monomer. Requires Zn(2+) as cofactor.

The catalysed reaction is Hydrolysis of DNA containing ring-opened 7-methylguanine residues, releasing 2,6-diamino-4-hydroxy-5-(N-methyl)formamidopyrimidine.. It catalyses the reaction 2'-deoxyribonucleotide-(2'-deoxyribose 5'-phosphate)-2'-deoxyribonucleotide-DNA = a 3'-end 2'-deoxyribonucleotide-(2,3-dehydro-2,3-deoxyribose 5'-phosphate)-DNA + a 5'-end 5'-phospho-2'-deoxyribonucleoside-DNA + H(+). Its function is as follows. Involved in base excision repair of DNA damaged by oxidation or by mutagenic agents. Acts as a DNA glycosylase that recognizes and removes damaged bases. Has a preference for oxidized purines, such as 7,8-dihydro-8-oxoguanine (8-oxoG). Has AP (apurinic/apyrimidinic) lyase activity and introduces nicks in the DNA strand. Cleaves the DNA backbone by beta-delta elimination to generate a single-strand break at the site of the removed base with both 3'- and 5'-phosphates. The protein is Formamidopyrimidine-DNA glycosylase of Azorhizobium caulinodans (strain ATCC 43989 / DSM 5975 / JCM 20966 / LMG 6465 / NBRC 14845 / NCIMB 13405 / ORS 571).